A 407-amino-acid polypeptide reads, in one-letter code: ATP-citrate synthase subunit alpha chain protein 1 (407 aa).

Citrate contacts are provided by Asn327, Thr329, and Arg360.

This sequence belongs to the succinate/malate CoA ligase beta subunit family. In terms of assembly, heterooctamer of 4 alpha and 4 beta chains.

Its subcellular location is the cytoplasm. The protein localises to the cytosol. The enzyme catalyses oxaloacetate + acetyl-CoA + ADP + phosphate = citrate + ATP + CoA. Its function is as follows. ATP citrate-lyase is the primary enzyme responsible for the synthesis of cytosolic acetyl-CoA, used for the elongation of fatty acids and biosynthesis of isoprenoids, flavonoids and malonated derivatives. May supply substrate to the cytosolic acetyl-CoA carboxylase, which generates the malonyl-CoA used for the synthesis of a multitude of compounds, including very long chain fatty acids and flavonoids. In contrast to all known animal ACL enzymes having a homomeric structure, plant ACLs are composed of alpha and beta chains. In Oryza sativa subsp. japonica (Rice), this protein is ATP-citrate synthase subunit alpha chain protein 1 (ACLA-1).